Here is a 312-residue protein sequence, read N- to C-terminus: L-lactate dehydrogenase (312 aa).

Residues V14, D35, and Y66 each coordinate NAD(+). Substrate is bound by residues Q83, R90, and 122–125 (NPVD). NAD(+) is bound by residues 120-122 (ASN) and S145. 150–153 (DSAR) lines the substrate pocket. Residue H177 is the Proton acceptor of the active site. Y220 is modified (phosphotyrosine). Substrate is bound at residue T229.

It belongs to the LDH/MDH superfamily. LDH family. As to quaternary structure, homotetramer.

The protein localises to the cytoplasm. It carries out the reaction (S)-lactate + NAD(+) = pyruvate + NADH + H(+). It functions in the pathway fermentation; pyruvate fermentation to lactate; (S)-lactate from pyruvate: step 1/1. In terms of biological role, catalyzes the conversion of lactate to pyruvate. The chain is L-lactate dehydrogenase from Mycoplasma pneumoniae (strain ATCC 29342 / M129 / Subtype 1) (Mycoplasmoides pneumoniae).